Reading from the N-terminus, the 576-residue chain is MPIYDEASVPGTAAGRSTTDVGATAGANPFNIPADEEIFRFREEERARKEQDKLIAQTMRVADKTTFAAQMQATATADARTLLRELRPPKGPKATTTLAASSVGTLDRRKEKENMADFIAKKREIFLLQMSLDTKRAEIKKLEERARQREEALKKSEQMLEEDALRFDAFLKENDEKVQEAIKKAEAEAKAKQDKVLEIKRLNTATAALRSELNKYEEQLEDCRRYKEFLDSITPPEWFEQQAAKLQRRKDALVAEWQSQCEALKQRREAALAAKTAAESDYANARTQQQAERAERAIKESVAALKEIMKEKEPQPPNLDFEMDPEDEEMYFQEPGQLLAVYKQLEESNLFYIQNAQETEEALEELRQKLRDTKTRMDAEAQGLQGQVSTLQASIVAAREKAKRLKDRTLENEGAFTLSMGSSNAPTSSVTGSSGPGGPVNLKELGDKVREVYVRCGFDADASISTLQMLTNIEMKLEEYLNLAEGMTPDYVDGAEKAREKDRRKVARDEKLSTQHREHEARMARALERAAAPVFKKTGKPLMFRSAPPQRKKVVQADDRNDEEAELEAYLAQDMI.

The tract at residues 1–29 is disordered; the sequence is MPIYDEASVPGTAAGRSTTDVGATAGANP. 3 coiled-coil regions span residues 125–226, 254–311, and 342–408; these read IFLL…CRRY, VAEW…IMKE, and YKQL…LKDR. Disordered stretches follow at residues 417 to 439, 495 to 519, and 538 to 563; these read TLSM…PGGP, AEKA…HREH, and TGKP…RNDE.

The protein belongs to the CFAP100 family. In terms of assembly, interacts with FAP73; form the modifier of inner arm (MIA) complex.

It localises to the cytoplasm. It is found in the cytoskeleton. Its subcellular location is the flagellum axoneme. Functionally, as part of MIA, a complex associated with the outer doublet microtubules of the axoneme, may play a role in ciliary/flagellar motility by regulating the assembly and the activity of axonemal inner dynein arm. This Chlamydomonas reinhardtii (Chlamydomonas smithii) protein is Cilia- and flagella-associated protein 100.